We begin with the raw amino-acid sequence, 142 residues long: Large ribosomal subunit protein uL13 (142 aa).

Belongs to the universal ribosomal protein uL13 family. Part of the 50S ribosomal subunit.

This protein is one of the early assembly proteins of the 50S ribosomal subunit, although it is not seen to bind rRNA by itself. It is important during the early stages of 50S assembly. This Mannheimia succiniciproducens (strain KCTC 0769BP / MBEL55E) protein is Large ribosomal subunit protein uL13.